Consider the following 1405-residue polypeptide: DNA-directed RNA polymerase subunit beta' (1405 aa).

4 residues coordinate Zn(2+): C71, C73, C86, and C89. The Mg(2+) site is built by D462, D464, and D466. Positions 820, 893, 900, and 903 each coordinate Zn(2+).

It belongs to the RNA polymerase beta' chain family. The RNAP catalytic core consists of 2 alpha, 1 beta, 1 beta' and 1 omega subunit. When a sigma factor is associated with the core the holoenzyme is formed, which can initiate transcription. Mg(2+) serves as cofactor. It depends on Zn(2+) as a cofactor.

It carries out the reaction RNA(n) + a ribonucleoside 5'-triphosphate = RNA(n+1) + diphosphate. Functionally, DNA-dependent RNA polymerase catalyzes the transcription of DNA into RNA using the four ribonucleoside triphosphates as substrates. In Methylorubrum extorquens (strain CM4 / NCIMB 13688) (Methylobacterium extorquens), this protein is DNA-directed RNA polymerase subunit beta'.